Consider the following 526-residue polypeptide: Probable Xaa-Pro aminopeptidase GLRG_02280 (526 aa).

Mn(2+)-binding residues include D285, D296, E454, and E495.

It belongs to the peptidase M24B family. Mn(2+) is required as a cofactor.

The enzyme catalyses Release of any N-terminal amino acid, including proline, that is linked to proline, even from a dipeptide or tripeptide.. Functionally, catalyzes the removal of a penultimate prolyl residue from the N-termini of peptides. The polypeptide is Probable Xaa-Pro aminopeptidase GLRG_02280 (Colletotrichum graminicola (strain M1.001 / M2 / FGSC 10212) (Maize anthracnose fungus)).